The chain runs to 160 residues: Phosphopantetheine adenylyltransferase (160 aa).

A substrate-binding site is contributed by Ser9. Residues 9-10 (SF) and His17 contribute to the ATP site. Lys41, Ile73, and Lys87 together coordinate substrate. Residues 88–90 (GLR), Glu98, and 122–128 (YSFVSSS) contribute to the ATP site.

The protein belongs to the bacterial CoaD family. In terms of assembly, homohexamer. The cofactor is Mg(2+).

It localises to the cytoplasm. The catalysed reaction is (R)-4'-phosphopantetheine + ATP + H(+) = 3'-dephospho-CoA + diphosphate. It participates in cofactor biosynthesis; coenzyme A biosynthesis; CoA from (R)-pantothenate: step 4/5. Reversibly transfers an adenylyl group from ATP to 4'-phosphopantetheine, yielding dephospho-CoA (dPCoA) and pyrophosphate. This is Phosphopantetheine adenylyltransferase from Mycolicibacterium vanbaalenii (strain DSM 7251 / JCM 13017 / BCRC 16820 / KCTC 9966 / NRRL B-24157 / PYR-1) (Mycobacterium vanbaalenii).